The following is a 168-amino-acid chain: Signal peptidase I V (168 aa).

Residues 1–6 (MKKRFW) are Cytoplasmic-facing. Residues 7–26 (FLAGVVSVVLAIQVKNAVFI) traverse the membrane as a helical segment. Over 27–168 (DYKVEGVSMN…NIVGVISDAE (142 aa)) the chain is Extracellular. Catalysis depends on residues Ser-34 and Lys-75.

The protein belongs to the peptidase S26 family.

The protein localises to the cell membrane. It carries out the reaction Cleavage of hydrophobic, N-terminal signal or leader sequences from secreted and periplasmic proteins.. The chain is Signal peptidase I V (sipV) from Bacillus subtilis (strain 168).